The following is a 72-amino-acid chain: uncharacterized protein (72 aa).

Residues 46–66 traverse the membrane as a helical segment; sequence AIFVFNLCFIPNLCVACIFNV.

It is found in the membrane. This is an uncharacterized protein from Saccharomyces cerevisiae (strain ATCC 204508 / S288c) (Baker's yeast).